Consider the following 282-residue polypeptide: Anamorsin homolog (282 aa).

An N-terminal SAM-like domain region spans residues 1-140 (MADLQGKAVL…KPVYEVGAAA (140 aa)). A linker region spans residues 141 to 192 (PLKLSFAKKKQSGAAAPAAQVAEVWTIATDDFDDDDLLENDGDELLDAEDLA). 4 residues coordinate [2Fe-2S] cluster: Cys203, Cys214, Cys217, and Cys219. Positions 203–219 (CEVGAGGKRRACKNCTC) are fe-S binding site A. Residues Cys243, Cys246, Cys254, and Cys257 each coordinate [4Fe-4S] cluster. 2 short sequence motifs (cx2C motif) span residues 243-246 (CGNC) and 254-257 (CASC). The segment at 243 to 257 (CGNCYLGDAFRCASC) is fe-S binding site B.

The protein belongs to the anamorsin family. Monomer. [2Fe-2S] cluster is required as a cofactor. The cofactor is [4Fe-4S] cluster.

The protein localises to the cytoplasm. The protein resides in the mitochondrion intermembrane space. In terms of biological role, component of the cytosolic iron-sulfur (Fe-S) protein assembly (CIA) machinery. Required for the maturation of extramitochondrial Fe-S proteins. Part of an electron transfer chain functioning in an early step of cytosolic Fe-S biogenesis, facilitating the de novo assembly of a [4Fe-4S] cluster on the cytosolic Fe-S scaffold complex. Electrons are transferred from NADPH via a FAD- and FMN-containing diflavin oxidoreductase. Together with the diflavin oxidoreductase, also required for the assembly of the diferric tyrosyl radical cofactor of ribonucleotide reductase (RNR), probably by providing electrons for reduction during radical cofactor maturation in the catalytic small subunit. The sequence is that of Anamorsin homolog from Monosiga brevicollis (Choanoflagellate).